Here is a 92-residue protein sequence, read N- to C-terminus: YcgL domain-containing protein HS_0805 (92 aa).

Positions 1–85 constitute a YcgL domain; sequence MLCAIYKTKR…QQENLLEQER (85 aa).

This is YcgL domain-containing protein HS_0805 from Histophilus somni (strain 129Pt) (Haemophilus somnus).